Here is a 992-residue protein sequence, read N- to C-terminus: Leucine-rich repeat receptor-like serine/threonine-protein kinase BAM3 (992 aa).

A signal peptide spans 1–21; sequence MADKIFTFFLILSSISPLLCS. The Extracellular segment spans residues 22–656; it reads SLISPLNLSL…ARSRGEISAK (635 aa). Asn28 carries an N-linked (GlcNAc...) asparagine glycan. Cys64 and Cys71 form a disulfide bridge. Residues Asn75 and Asn87 are each glycosylated (N-linked (GlcNAc...) asparagine). 6 LRR repeats span residues 75-99, 100-124, 126-148, 150-173, 174-199, and 201-221; these read NQSI…ISRL, SPSL…IYEL, GLEV…GFSQ, TQLV…LTTL, TRLE…SFLS, and KFLS…LANI. N-linked (GlcNAc...) asparagine glycosylation is found at Asn131 and Asn163. A glycan (N-linked (GlcNAc...) asparagine) is linked at Asn220. Residues 226-231 carry the CLE45 peptide binding motif; the sequence is QLYLGY. 15 LRR repeats span residues 246–270, 271–294, 296–320, 322–342, 343–366, 368–391, 393–414, 415–438, 439–462, 465–489, 491–513, 514–536, 537–561, 563–585, and 586–610; these read LINL…LGNL, KNLE…LGNM, SLKT…GLQK, QLFN…VSEL, PDLQ…LGSN, NLIE…CFGR, LKIL…LGQC, EPLW…LIYL, PNLS…EAGN, FSSL…IRNL, SLQI…IGSL, KSLL…EFGD, CMSL…ISQI, ILNY…LGYM, and KSLT…QFSY. N-linked (GlcNAc...) asparagine glycosylation is found at Asn256 and Asn293. Asn354 carries N-linked (GlcNAc...) asparagine glycosylation. N-linked (GlcNAc...) asparagine glycosylation is found at Asn440 and Asn472. Asn525 is a glycosylation site (N-linked (GlcNAc...) asparagine). N-linked (GlcNAc...) asparagine glycans are attached at residues Asn568, Asn575, Asn597, Asn613, Asn631, and Asn635. The helical transmembrane segment at 657 to 677 threads the bilayer; that stretch reads FKLFFGLGLLGFFLVFVVLAV. The Cytoplasmic portion of the chain corresponds to 678–992; sequence VKNRRMRKNN…ISQAKQPNTF (315 aa). One can recognise a Protein kinase domain in the interval 710-992; it reads VKENHVIGKG…ISQAKQPNTF (283 aa). ATP-binding positions include 716-724 and Lys738; that span reads IGKGGRGIV. Catalysis depends on Asp836, which acts as the Proton acceptor.

The protein belongs to the protein kinase superfamily. Ser/Thr protein kinase family. As to quaternary structure, interacts with CLE45, especially in roots. Binds to the dimer CLV2/CRN. In terms of tissue distribution, expressed in seedlings, roots, leaves, stems, inflorescences, flowers and siliques. In roots, confined to protophloem and sieve element precursor cells.

The protein resides in the cell membrane. It is found in the endoplasmic reticulum membrane. The catalysed reaction is L-seryl-[protein] + ATP = O-phospho-L-seryl-[protein] + ADP + H(+). The enzyme catalyses L-threonyl-[protein] + ATP = O-phospho-L-threonyl-[protein] + ADP + H(+). In terms of biological role, necessary for male gametophyte development, as well as ovule specification and function. Required for the development of high-ordered vascular strands within the leaf and a correlated control of leaf shape, size and symmetry. LRR-rich receptor-like kinase (LRR-RLK) involved in the perception of CLE45 peptide ligand which mediates root growth inhibition by repressing protophloem differentiation; this mechanism requires CRN. BRX, BAM3, and CLE45 act together to regulate the transition of protophloem cells from proliferation to differentiation, thus impinging on postembryonic growth capacity of the root meristem. Necessary for CLE45 peptide-triggered accumulation of MAKR5 in developing sieve elements. The polypeptide is Leucine-rich repeat receptor-like serine/threonine-protein kinase BAM3 (Arabidopsis thaliana (Mouse-ear cress)).